The following is a 114-amino-acid chain: Peroxisomal biogenesis factor 39 (114 aa).

Disordered regions lie at residues 1 to 26 (MSWWQDMDQRGGVSSPSGALASAEPA) and 53 to 114 (ITAT…PRVS). Residue Ser-102 is modified to Phosphoserine.

It is found in the peroxisome. May be a peroxin involved in the PTS2-mediated protein import pathway. The sequence is that of Peroxisomal biogenesis factor 39 (Pex39) from Mus musculus (Mouse).